A 2415-amino-acid polypeptide reads, in one-letter code: Spectrin alpha chain, erythrocytic 1 (2415 aa).

Spectrin repeat units lie at residues 52–152 (YHYQ…SDVL), 157–259 (KFYQ…ESLS), 263–365 (DLQR…AKLK), 370–471 (YHRF…HQYR), 475–576 (DFHL…RKLL), 580–681 (QLLQ…GTQL), 686–787 (QLLQ…KKKL), 792–894 (KLQQ…NDLK), and 898–967 (QLQQ…QQQQ). Phosphoserine is present on S257. One can recognise an SH3 domain in the interval 975–1034 (GREARVIALYDFEARSRREVSMKKNDVLTLLSSINKDWWKVEADDHQGFVPAVYVRKLAP). A Phosphoserine modification is found at S990. Spectrin repeat units follow at residues 1085–1177 (LAYE…YQLL), 1183–1285 (VEMF…SLNE), 1287–1390 (HKFF…KMLD), 1394–1489 (ELQL…QLLT), 1499–1603 (DLKQ…KLNE), 1606–1709 (RQQR…KLKE), 1712–1815 (ALFQ…NLEE), 1818–1921 (EYLQ…SQLD), 1924–2029 (HAFQ…KLLE), 2040–2142 (LFME…QELQ), and 2154–2254 (MCQE…NLEQ). S1972 carries the phosphoserine modification. 3 consecutive EF-hand domains span residues 2267-2302 (ETLK…LNYY), 2310-2345 (EPEP…KESE), and 2347-2382 (IKTS…EQVS). Residues D2280, N2282, T2284, R2286, E2291, D2323, Y2329, and D2334 each coordinate Ca(2+).

Belongs to the spectrin family. Composed of non-homologous chains, alpha and beta, which aggregate to form dimers, tetramers, and higher polymers. Interacts with FASLG. Interacts with BCAM.

The protein localises to the cytoplasm. It localises to the cytoskeleton. It is found in the cell cortex. Its function is as follows. Spectrin is the major constituent of the cytoskeletal network underlying the erythrocyte plasma membrane. It associates with band 4.1 and actin to form the cytoskeletal superstructure of the erythrocyte plasma membrane. The protein is Spectrin alpha chain, erythrocytic 1 (Spta1) of Mus musculus (Mouse).